The sequence spans 428 residues: Dihydroorotase (428 aa).

Zn(2+) contacts are provided by H59 and H61. Residues 61–63 and N93 contribute to the substrate site; that span reads HLR. D151, H178, and H231 together coordinate Zn(2+). N277 provides a ligand contact to substrate. A Zn(2+)-binding site is contributed by D304. D304 is an active-site residue. Substrate-binding positions include H308 and 322 to 323; that span reads FG.

The protein belongs to the metallo-dependent hydrolases superfamily. DHOase family. Class I DHOase subfamily. Zn(2+) is required as a cofactor.

The enzyme catalyses (S)-dihydroorotate + H2O = N-carbamoyl-L-aspartate + H(+). It participates in pyrimidine metabolism; UMP biosynthesis via de novo pathway; (S)-dihydroorotate from bicarbonate: step 3/3. Functionally, catalyzes the reversible cyclization of carbamoyl aspartate to dihydroorotate. The sequence is that of Dihydroorotase from Bacillus pumilus (strain SAFR-032).